The chain runs to 417 residues: Voltage-gated ClC-type chloride channel ClcB (417 aa).

10 consecutive transmembrane segments (helical) span residues 5-25 (LLIATLIGILAALAVAAFRHA), 54-74 (LITPALGGLAAGLLLWGWQKM), 146-166 (LWIASGAAAGMAGAYHAPLAG), 168-188 (LFIAEILFGTLMLASLGPVVV), 222-242 (VMIVSTGLVAGLCGPLLMWLM), 258-278 (WQLALGGLIVGLLSLLTPTVW), 288-308 (FLLSPPLFSLIGGIFACKILA), 316-336 (GAPGGVFTPTLFVGLSIGMFL), 349-371 (EIAILLGLAGMATLLAATTHAPI), and 380-400 (MTGEYQLLPGLLIACVVASVL).

It belongs to the chloride channel (TC 2.A.49) family. ClcB subfamily.

It is found in the cell inner membrane. In terms of biological role, probably acts as an electrical shunt for an outwardly-directed proton pump that is linked to amino acid decarboxylation, as part of the extreme acid resistance (XAR) response. The chain is Voltage-gated ClC-type chloride channel ClcB from Salmonella dublin (strain CT_02021853).